A 124-amino-acid chain; its full sequence is Large ribosomal subunit protein bL12 (124 aa).

The protein belongs to the bacterial ribosomal protein bL12 family. Homodimer. Part of the ribosomal stalk of the 50S ribosomal subunit. Forms a multimeric L10(L12)X complex, where L10 forms an elongated spine to which 2 to 4 L12 dimers bind in a sequential fashion. Binds GTP-bound translation factors.

Its function is as follows. Forms part of the ribosomal stalk which helps the ribosome interact with GTP-bound translation factors. Is thus essential for accurate translation. This is Large ribosomal subunit protein bL12 from Janthinobacterium sp. (strain Marseille) (Minibacterium massiliensis).